Consider the following 937-residue polypeptide: Isoleucine--tRNA ligase (937 aa).

A 'HIGH' region motif is present at residues 58 to 68 (PYANGHIHLGT). E566 lines the L-isoleucyl-5'-AMP pocket. The short motif at 607–611 (KMSKS) is the 'KMSKS' region element. K610 contributes to the ATP binding site. Positions 906, 909, 925, and 928 each coordinate Zn(2+).

Belongs to the class-I aminoacyl-tRNA synthetase family. IleS type 1 subfamily. Monomer. Zn(2+) serves as cofactor.

Its subcellular location is the cytoplasm. It catalyses the reaction tRNA(Ile) + L-isoleucine + ATP = L-isoleucyl-tRNA(Ile) + AMP + diphosphate. Catalyzes the attachment of isoleucine to tRNA(Ile). As IleRS can inadvertently accommodate and process structurally similar amino acids such as valine, to avoid such errors it has two additional distinct tRNA(Ile)-dependent editing activities. One activity is designated as 'pretransfer' editing and involves the hydrolysis of activated Val-AMP. The other activity is designated 'posttransfer' editing and involves deacylation of mischarged Val-tRNA(Ile). The polypeptide is Isoleucine--tRNA ligase (Lawsonia intracellularis (strain PHE/MN1-00)).